Reading from the N-terminus, the 124-residue chain is Large ribosomal subunit protein uL18 (124 aa).

The protein belongs to the universal ribosomal protein uL18 family. In terms of assembly, part of the 50S ribosomal subunit; part of the 5S rRNA/L5/L18/L25 subcomplex. Contacts the 5S and 23S rRNAs.

In terms of biological role, this is one of the proteins that bind and probably mediate the attachment of the 5S RNA into the large ribosomal subunit, where it forms part of the central protuberance. This Orientia tsutsugamushi (strain Boryong) (Rickettsia tsutsugamushi) protein is Large ribosomal subunit protein uL18.